A 246-amino-acid polypeptide reads, in one-letter code: 3-oxoacyl-[acyl-carrier-protein] reductase FabG (246 aa).

NADP(+)-binding positions include 11-14 (GASR), Ser36, 62-63 (DV), and Asn89. Residue Ser141 participates in substrate binding. The Proton acceptor role is filled by Tyr154. Residues 154–158 (YVAAK) and Ile187 contribute to the NADP(+) site.

The protein belongs to the short-chain dehydrogenases/reductases (SDR) family. Homotetramer.

It catalyses the reaction a (3R)-hydroxyacyl-[ACP] + NADP(+) = a 3-oxoacyl-[ACP] + NADPH + H(+). Its pathway is lipid metabolism; fatty acid biosynthesis. In terms of biological role, catalyzes the NADPH-dependent reduction of beta-ketoacyl-ACP substrates to beta-hydroxyacyl-ACP products, the first reductive step in the elongation cycle of fatty acid biosynthesis. This is 3-oxoacyl-[acyl-carrier-protein] reductase FabG (fabG) from Bacillus subtilis (strain 168).